We begin with the raw amino-acid sequence, 276 residues long: Large ribosomal subunit protein uL2 (276 aa).

Residues Asn-212 to Lys-276 are disordered. The span at Tyr-257–Lys-276 shows a compositional bias: basic residues.

Belongs to the universal ribosomal protein uL2 family. Part of the 50S ribosomal subunit. Forms a bridge to the 30S subunit in the 70S ribosome.

Its function is as follows. One of the primary rRNA binding proteins. Required for association of the 30S and 50S subunits to form the 70S ribosome, for tRNA binding and peptide bond formation. It has been suggested to have peptidyltransferase activity; this is somewhat controversial. Makes several contacts with the 16S rRNA in the 70S ribosome. The protein is Large ribosomal subunit protein uL2 of Helicobacter pylori (strain P12).